Reading from the N-terminus, the 160-residue chain is Ribosome-binding factor A (160 aa).

The segment covering 112–122 (KARQSDEKVRE) has biased composition (basic and acidic residues). The tract at residues 112–160 (KARQSDEKVREASAGATYAGEADPYRKPDEDETDTEGAVEADETDDTAK) is disordered. Acidic residues predominate over residues 141–160 (EDETDTEGAVEADETDDTAK).

Belongs to the RbfA family. Monomer. Binds 30S ribosomal subunits, but not 50S ribosomal subunits or 70S ribosomes.

Its subcellular location is the cytoplasm. In terms of biological role, one of several proteins that assist in the late maturation steps of the functional core of the 30S ribosomal subunit. Associates with free 30S ribosomal subunits (but not with 30S subunits that are part of 70S ribosomes or polysomes). Required for efficient processing of 16S rRNA. May interact with the 5'-terminal helix region of 16S rRNA. This is Ribosome-binding factor A from Streptomyces coelicolor (strain ATCC BAA-471 / A3(2) / M145).